The chain runs to 337 residues: Probable cytosolic iron-sulfur protein assembly protein CIAO1 homolog (337 aa).

WD repeat units lie at residues 15–54 (DDTSRVWMTCWHHGGRILASCGDDKAVRVWSLVGEPDSKM), 65–104 (SHTRAVRSVAFSNDGKCLVSASFDASVVVYQQEDGEFAEV), 109–148 (GHESEVKCAVFSKSDEFLATCSRDKSVWFWQQDEDEDFSV), 154–193 (PHTQDVKQVAWHPTEDLLVSCSYDSSIRFYRFDGEDWVTQ), 199–238 (CHVGTVWSIAFDTEGHRLVTVGEDHCIQLFVRENIGSKSA), 253–292 (NTRWPLYSVAWNSTNDVIATGGGDCKIRLFKISSTPESPV), and 301–337 (RHELDVNHVAWNPNPKFSNLLTSASDDGTIRLWELEI).

The protein belongs to the WD repeat CIA1 family.

Functionally, essential component of the cytosolic iron-sulfur (Fe/S) protein assembly machinery. Required for the maturation of extramitochondrial Fe/S proteins. The polypeptide is Probable cytosolic iron-sulfur protein assembly protein CIAO1 homolog (Caenorhabditis elegans).